The sequence spans 432 residues: Putative D-alanyl-D-alanine carboxypeptidase (432 aa).

The chain crosses the membrane as a helical; Signal-anchor span at residues 7–25 (ATVLLTFSLSAFAVEYPVL).

Belongs to the peptidase S12 family. YfeW subfamily.

The protein localises to the cell inner membrane. It carries out the reaction Preferential cleavage: (Ac)2-L-Lys-D-Ala-|-D-Ala. Also transpeptidation of peptidyl-alanyl moieties that are N-acyl substituents of D-alanine.. This chain is Putative D-alanyl-D-alanine carboxypeptidase, found in Salmonella agona (strain SL483).